Reading from the N-terminus, the 472-residue chain is MAATLTGSGIALGFSCSAKFSKRASSSSNRRCIKMSVSVEEKTKKFTLQKSEEAFNAAKNLMPGGVNSPVRAFKSVGGQPVVMDSAKGSRIRDIDGNEYIDYVGSWGPAIIGHADDEVLAALAETMKKGTSFGAPCLLENVLAEMVISAVPSIEMVRFVNSGTEACMGVLRLARAFTGKQKFIKFEGCYHGHANSFLVKAGSGVATLGLPDSPGVPKAATSDTLTAPYNDIAAVEKLFEANKGEIAAIILEPVVGNSGFITPKPEFIEGIRRITKDNGALLIFDEVMTGFRLAYGGAQEYFGITPDLTTLGKIIGGGLPVGAYGGRRDIMEMVAPAGPMYQAGTLSGNPLAMTAGIHTLKRLSQPGTYEYLDKITKELTNGILEAGKKTGHAMCGGYISGMFGFFFTEGPVYDFSDAKKSDTEKFGKFFRGMLEEGVYLAPSQFEAGFTSLAHTSEDIQFTIAAAEKVLSRL.

A chloroplast-targeting transit peptide spans 1–36 (MAATLTGSGIALGFSCSAKFSKRASSSSNRRCIKMS). Lys312 is subject to N6-(pyridoxal phosphate)lysine.

This sequence belongs to the class-III pyridoxal-phosphate-dependent aminotransferase family. HemL subfamily. Homodimer. The cofactor is pyridoxal 5'-phosphate. As to expression, expressed in leaf primordia and shoot apical meristems (SAM).

It localises to the plastid. The protein localises to the chloroplast. The catalysed reaction is (S)-4-amino-5-oxopentanoate = 5-aminolevulinate. It participates in porphyrin-containing compound metabolism; protoporphyrin-IX biosynthesis; 5-aminolevulinate from L-glutamyl-tRNA(Glu): step 2/2. Its pathway is porphyrin-containing compound metabolism; chlorophyll biosynthesis. Its function is as follows. Transaminase converting glutamate 1-semialdehyde (GSA) to 5-aminolevulinate (ALA). Involved in the biosynthesis of tetrapyrroles. This chain is Glutamate-1-semialdehyde 2,1-aminomutase 2, chloroplastic, found in Arabidopsis thaliana (Mouse-ear cress).